The sequence spans 87 residues: U14-lycotoxin-Ls1c (87 aa).

The first 20 residues, 1 to 20 (MNSKVFAVLLLLALLTCILS), serve as a signal peptide directing secretion. A WAP domain is found at 21 to 66 (EKYCPTPRNTSCKKMNIKNNCCRDSDCTSNAFCCAEPCGNFCHKAS). 5 cysteine pairs are disulfide-bonded: C24–C54, C32–C58, C41–C53, C42–C80, and C47–C62.

This sequence belongs to the venom protein 11 family. 01 (wap-1) subfamily. In terms of processing, contains 5 disulfide bonds. In terms of tissue distribution, expressed by the venom gland.

The protein resides in the secreted. In terms of biological role, has antibacterial activity. The chain is U14-lycotoxin-Ls1c from Lycosa singoriensis (Wolf spider).